The primary structure comprises 449 residues: Adenylosuccinate synthetase (449 aa).

Residues 12–18 (GDEGKGK) and 40–42 (GHT) each bind GTP. Asp13 serves as the catalytic Proton acceptor. Mg(2+)-binding residues include Asp13 and Gly40. IMP is bound by residues 13–16 (DEGK), 38–41 (NAGH), Thr128, Arg142, Gln223, Thr238, and Arg302. His41 functions as the Proton donor in the catalytic mechanism. Residue 298-304 (TTTGRQR) participates in substrate binding. GTP-binding positions include Arg304, 330–332 (KLD), and 412–414 (SLG).

Belongs to the adenylosuccinate synthetase family. In terms of assembly, homodimer. Mg(2+) is required as a cofactor.

The protein resides in the cytoplasm. It catalyses the reaction IMP + L-aspartate + GTP = N(6)-(1,2-dicarboxyethyl)-AMP + GDP + phosphate + 2 H(+). Its pathway is purine metabolism; AMP biosynthesis via de novo pathway; AMP from IMP: step 1/2. Its function is as follows. Plays an important role in the de novo pathway of purine nucleotide biosynthesis. Catalyzes the first committed step in the biosynthesis of AMP from IMP. The sequence is that of Adenylosuccinate synthetase from Synechococcus sp. (strain JA-2-3B'a(2-13)) (Cyanobacteria bacterium Yellowstone B-Prime).